We begin with the raw amino-acid sequence, 203 residues long: Hydra actinoporin-like toxin 2 (203 aa).

An N-terminal signal peptide occupies residues 1-21 (MLSYLCFGCFLVSASLEIACG). The Cell attachment site signature appears at 175-177 (RGG).

Belongs to the actinoporin family. HALT subfamily. As to quaternary structure, octamer or nonamer in membranes. Monomer in the soluble state. In vitro, interacts with folate receptor alpha (of target organism). As to expression, strongly expressed in the gland and mucous cells in the endoderm.

The protein localises to the nematocyst. It is found in the secreted. Its subcellular location is the target cell membrane. Functionally, pore-forming protein that forms hydrophilic pores and causes cytolysis. Compared to equinatoxin-2 (AC P61914), it reveals lower cytolysis activity (5-12-fold difference, tested on erythrocytes), a larger pore size (probably 2-3 nm) and different affinity to membrane lipids (100-fold lower affinity to sphingomyelin). Binds to sulfatides (SFT). Shows cytolytic activity on HeLa cells, with a different potency than its paralogs (from most potent to less potent: HALT-4&gt;HALT-6~HALT-1&gt;HALT-3&gt;HALT-7&gt;HALT-2). Pore formation is a multi-step process that involves specific recognition of membrane lipid by a protein aromatic residues rich region, firm binding to the membrane (mainly driven by hydrophobic interactions) accompanied by the transfer of the N-terminal region to the lipid-water interface and finally pore formation after oligomerization of monomers. In vitro, binds to the folate receptor alpha (FOLR1), a GPI-anchored membrane protein that plays a major role in the uptake of folate/folic acid into cells via endocytosis, suggesting a possible involvement of this receptor in the mechanism of HALT-1-induced cell lysis. In vivo, does not cause visible paralysis in larvae of the blowfly Sarcophaga faculata, the most common arthropod prey of Hydra. This chain is Hydra actinoporin-like toxin 2, found in Hydra vulgaris (Hydra).